The chain runs to 100 residues: EKC/KEOPS complex subunit GON7 (100 aa).

Residue M1 is modified to N-acetylmethionine. Positions 61–100 are disordered; it reads AAAPDEDLDGDDEDDAEDENNIDNRTNFDGPSAKRPKTPS. A compositionally biased stretch (acidic residues) spans 64–81; it reads PDEDLDGDDEDDAEDENN.

As to quaternary structure, component of the EKC/KEOPS complex composed of at least GON7, TP53RK, TPRKB, OSGEP and LAGE3; the whole complex dimerizes.

The protein resides in the nucleus. Component of the EKC/KEOPS complex that is required for the formation of a threonylcarbamoyl group on adenosine at position 37 (t(6)A37) in tRNAs that read codons beginning with adenine. The complex is probably involved in the transfer of the threonylcarbamoyl moiety of threonylcarbamoyl-AMP (TC-AMP) to the N6 group of A37. GON7 plays a supporting role to the catalytic subunit OSGEP in the complex. The sequence is that of EKC/KEOPS complex subunit GON7 from Homo sapiens (Human).